We begin with the raw amino-acid sequence, 174 residues long: UPF0200 protein PAE1629 (174 aa).

9-16 (GLPGSGKT) provides a ligand contact to ATP.

It belongs to the UPF0200 family.

This is UPF0200 protein PAE1629 from Pyrobaculum aerophilum (strain ATCC 51768 / DSM 7523 / JCM 9630 / CIP 104966 / NBRC 100827 / IM2).